The sequence spans 376 residues: UDP-N-acetylglucosamine--N-acetylmuramyl-(pentapeptide) pyrophosphoryl-undecaprenol N-acetylglucosamine transferase (376 aa).

UDP-N-acetyl-alpha-D-glucosamine-binding positions include 11–13 (TGG), Asn-117, Arg-160, Ser-208, and Gln-310.

Belongs to the glycosyltransferase 28 family. MurG subfamily.

It is found in the cell inner membrane. It carries out the reaction di-trans,octa-cis-undecaprenyl diphospho-N-acetyl-alpha-D-muramoyl-L-alanyl-D-glutamyl-meso-2,6-diaminopimeloyl-D-alanyl-D-alanine + UDP-N-acetyl-alpha-D-glucosamine = di-trans,octa-cis-undecaprenyl diphospho-[N-acetyl-alpha-D-glucosaminyl-(1-&gt;4)]-N-acetyl-alpha-D-muramoyl-L-alanyl-D-glutamyl-meso-2,6-diaminopimeloyl-D-alanyl-D-alanine + UDP + H(+). It participates in cell wall biogenesis; peptidoglycan biosynthesis. Its function is as follows. Cell wall formation. Catalyzes the transfer of a GlcNAc subunit on undecaprenyl-pyrophosphoryl-MurNAc-pentapeptide (lipid intermediate I) to form undecaprenyl-pyrophosphoryl-MurNAc-(pentapeptide)GlcNAc (lipid intermediate II). This Rickettsia peacockii (strain Rustic) protein is UDP-N-acetylglucosamine--N-acetylmuramyl-(pentapeptide) pyrophosphoryl-undecaprenol N-acetylglucosamine transferase.